A 295-amino-acid chain; its full sequence is Cytidine deaminase (295 aa).

2 consecutive CMP/dCMP-type deaminase domains span residues 48–168 (SDKE…FGPA) and 187–295 (DDKD…FVNV). Position 89–91 (89–91 (NME)) interacts with substrate. H102 provides a ligand contact to Zn(2+). Residue E104 is the Proton donor of the active site. C129 and C132 together coordinate Zn(2+).

This sequence belongs to the cytidine and deoxycytidylate deaminase family. Homodimer. Zn(2+) serves as cofactor.

It carries out the reaction cytidine + H2O + H(+) = uridine + NH4(+). The enzyme catalyses 2'-deoxycytidine + H2O + H(+) = 2'-deoxyuridine + NH4(+). This enzyme scavenges exogenous and endogenous cytidine and 2'-deoxycytidine for UMP synthesis. The sequence is that of Cytidine deaminase from Vibrio parahaemolyticus serotype O3:K6 (strain RIMD 2210633).